A 402-amino-acid chain; its full sequence is Type II NADH:quinone oxidoreductase (402 aa).

FAD is bound by residues 12–16, 39–40, and valine 83; these read GAGYA and NK. The active site involves glutamate 172. FAD contacts are provided by residues aspartate 302, 319–320, and lysine 379; that span reads AQ.

The protein belongs to the NADH dehydrogenase family. FAD is required as a cofactor.

The protein localises to the cell membrane. The catalysed reaction is a quinone + NADH + H(+) = a quinol + NAD(+). Alternative, nonproton pumping NADH:quinone oxidoreductase that delivers electrons to the respiratory chain by oxidation of NADH and reduction of quinones, and contributes to the regeneration of NAD(+). The protein is Type II NADH:quinone oxidoreductase of Staphylococcus aureus (strain MSSA476).